Here is a 173-residue protein sequence, read N- to C-terminus: C-phycocyanin-3 beta subunit (173 aa).

Asparagine 73 carries the N4-methylasparagine modification. (2R,3E)-phycocyanobilin is bound by residues cysteine 83 and cysteine 154.

This sequence belongs to the phycobiliprotein family. In terms of assembly, heterodimer of an alpha and a beta subunit, which further assembles into trimers and the trimers into hexamers. Contains two covalently linked bilin chromophores.

The protein resides in the cellular thylakoid membrane. Its function is as follows. Light-harvesting photosynthetic bile pigment-protein from the phycobiliprotein complex (phycobilisome, PBS). Phycocyanin is the major phycobiliprotein in the PBS rod. The sequence is that of C-phycocyanin-3 beta subunit (cpcB3) from Microchaete diplosiphon (Fremyella diplosiphon).